We begin with the raw amino-acid sequence, 305 residues long: ATP synthase subunit gamma, mitochondrial (305 aa).

It belongs to the ATPase gamma chain family. In terms of assembly, F-type ATPases have 2 components, F(1) - the catalytic core - and F(o) - the membrane proton channel. F(1) has five subunits: alpha(3), beta(3), gamma(1), delta(1), epsilon(1), plus the additional subunit P18 (Tb427.05.1710) that is not present in F(1)F(o) ATP synthase from metazoa. Subunit P18 (Tb927.5.1710) interacts with the alpha subunit with a 1:1 stoichiometry; the interaction is direct. Subunit gamma is part of the central stalk. F(o) has three main subunits: a, b and c. The trypanosomal ATPase complex contains additional subunits that are not present in the F(1)F(o) ATP synthase from metazoa.

It is found in the mitochondrion. The protein resides in the mitochondrion inner membrane. Mitochondrial membrane ATP synthase (F(1)F(o) ATP synthase) produces ATP from ADP in the presence of a proton gradient across the membrane which is generated by electron transport complexes of the respiratory chain. F-type ATPases consist of two structural domains, F(1) - containing the extramembraneous catalytic core, and F(o) - containing the membrane proton channel, linked together by a central stalk and a peripheral stalk. During catalysis, ATP synthesis in the catalytic domain of F(1) is coupled via a rotary mechanism of the central stalk subunits to proton translocation. Subunits alpha and beta form the catalytic core in F(1). Rotation of the central stalk against the surrounding alpha(3)beta(3) subunits leads to hydrolysis of ATP in three separate catalytic sites on the beta subunits. Contrary to the procyclic, insect form that requires F(1)F(o) ATP synthase for ATP synthesis, the bloodstream form relies on ATP hydrolysis by F(1)F(o) ATP synthase to maintain its mitochondrial membrane potential. The polypeptide is ATP synthase subunit gamma, mitochondrial (Trypanosoma brucei brucei).